We begin with the raw amino-acid sequence, 353 residues long: MTAILERRESESLWGRFCNWITSTENRLYIGWFGVLMIPTLLTATSVFIIAFIAAPPVDIDGIREPVSGSLLYGNNIISGAIIPTSAAIGLHFYPIWEAASVDEWLYNGGPYELIVLHFLLGVACYMGREWELSFRLGMRPWIAVAYSAPVAAATAVFLIYPIGQGSFSDGMPLGISGTFNFMIVFQAEHNILMHPFHMLGVAGVFGGSLFSAMHGSLVTSSLIRETTENESANEGYRFGQEEETYNIVAAHGYFGRLIFQYASFNNSRSLHFFLAAWPVIGIWFTALGISTMAFNLNGFNFNQSVVDSQGRVINTWADIINRANLGMEVMHERNAHNFPLDLAAIEAPSTNG.

Thr2 bears the N-acetylthreonine mark. A Phosphothreonine modification is found at Thr2. The next 3 helical transmembrane spans lie at Tyr29 to Ser46, His118 to Leu133, and Trp142 to Ala156. His118 lines the chlorophyll a pocket. Residue Tyr126 coordinates pheophytin a. Positions 170 and 189 each coordinate [CaMn4O5] cluster. The chain crosses the membrane as a helical span at residues Phe197 to Leu218. His198 lines the chlorophyll a pocket. A quinone-binding positions include His215 and Ser264–Phe265. His215 is a Fe cation binding site. His272 contributes to the Fe cation binding site. A helical transmembrane segment spans residues Phe274 to Leu288. Residues His332, Glu333, Asp342, and Ala344 each contribute to the [CaMn4O5] cluster site. Positions Ala345–Gly353 are excised as a propeptide.

This sequence belongs to the reaction center PufL/M/PsbA/D family. PSII is composed of 1 copy each of membrane proteins PsbA, PsbB, PsbC, PsbD, PsbE, PsbF, PsbH, PsbI, PsbJ, PsbK, PsbL, PsbM, PsbT, PsbX, PsbY, PsbZ, Psb30/Ycf12, at least 3 peripheral proteins of the oxygen-evolving complex and a large number of cofactors. It forms dimeric complexes. The cofactor is The D1/D2 heterodimer binds P680, chlorophylls that are the primary electron donor of PSII, and subsequent electron acceptors. It shares a non-heme iron and each subunit binds pheophytin, quinone, additional chlorophylls, carotenoids and lipids. D1 provides most of the ligands for the Mn4-Ca-O5 cluster of the oxygen-evolving complex (OEC). There is also a Cl(-1) ion associated with D1 and D2, which is required for oxygen evolution. The PSII complex binds additional chlorophylls, carotenoids and specific lipids.. Post-translationally, tyr-161 forms a radical intermediate that is referred to as redox-active TyrZ, YZ or Y-Z. C-terminally processed by CTPA; processing is essential to allow assembly of the oxygen-evolving complex and thus photosynthetic growth.

The protein resides in the plastid. It is found in the chloroplast thylakoid membrane. The catalysed reaction is 2 a plastoquinone + 4 hnu + 2 H2O = 2 a plastoquinol + O2. Its function is as follows. Photosystem II (PSII) is a light-driven water:plastoquinone oxidoreductase that uses light energy to abstract electrons from H(2)O, generating O(2) and a proton gradient subsequently used for ATP formation. It consists of a core antenna complex that captures photons, and an electron transfer chain that converts photonic excitation into a charge separation. The D1/D2 (PsbA/PsbD) reaction center heterodimer binds P680, the primary electron donor of PSII as well as several subsequent electron acceptors. This Amaranthus hybridus (Slim amaranth) protein is Photosystem II protein D1.